Reading from the N-terminus, the 140-residue chain is Large ribosomal subunit protein bL17 (140 aa).

It belongs to the bacterial ribosomal protein bL17 family. In terms of assembly, part of the 50S ribosomal subunit. Contacts protein L32.

This Rhizobium etli (strain CIAT 652) protein is Large ribosomal subunit protein bL17.